We begin with the raw amino-acid sequence, 257 residues long: 5-oxoprolinase subunit A (257 aa).

It belongs to the LamB/PxpA family. In terms of assembly, forms a complex composed of PxpA, PxpB and PxpC.

The enzyme catalyses 5-oxo-L-proline + ATP + 2 H2O = L-glutamate + ADP + phosphate + H(+). Its function is as follows. Catalyzes the cleavage of 5-oxoproline to form L-glutamate coupled to the hydrolysis of ATP to ADP and inorganic phosphate. This is 5-oxoprolinase subunit A from Halalkalibacterium halodurans (strain ATCC BAA-125 / DSM 18197 / FERM 7344 / JCM 9153 / C-125) (Bacillus halodurans).